Reading from the N-terminus, the 536-residue chain is 2,3-bisphosphoglycerate-independent phosphoglycerate mutase (536 aa).

Aspartate 19 and serine 69 together coordinate Mn(2+). The active-site Phosphoserine intermediate is the serine 69. Residues histidine 130, 160–161, arginine 192, arginine 198, 262–265, and lysine 335 each bind substrate; these read RD and RPDR. Aspartate 402, histidine 406, aspartate 443, histidine 444, and histidine 461 together coordinate Mn(2+).

This sequence belongs to the BPG-independent phosphoglycerate mutase family. Monomer. Mn(2+) is required as a cofactor.

It catalyses the reaction (2R)-2-phosphoglycerate = (2R)-3-phosphoglycerate. Its pathway is carbohydrate degradation; glycolysis; pyruvate from D-glyceraldehyde 3-phosphate: step 3/5. Catalyzes the interconversion of 2-phosphoglycerate and 3-phosphoglycerate. The polypeptide is 2,3-bisphosphoglycerate-independent phosphoglycerate mutase (Gloeobacter violaceus (strain ATCC 29082 / PCC 7421)).